The chain runs to 285 residues: Golgi to ER traffic protein 2 (285 aa).

Over residues 1–10 the composition is skewed to basic and acidic residues; the sequence is MSELTEAEKR. 2 disordered regions span residues 1–72 and 87–106; these read MSEL…KEDS and MQGQGTGKSTPQDSSTPDLL. S2 carries the N-acetylserine modification. Residues 2 to 148 lie on the Cytoplasmic side of the membrane; that stretch reads SELTEAEKRR…LDYHDYLLNR (147 aa). Residues 11-20 are compositionally biased toward basic residues; sequence RLLRERRQKK. The span at 24 to 42 shows a compositional bias: polar residues; it reads GGASSRLNKITGQASSHLN. S45 is modified (phosphoserine). A compositionally biased stretch (low complexity) spans 49–60; the sequence is APSAAKTTPPAS. A compositionally biased stretch (polar residues) spans 93–104; the sequence is GKSTPQDSSTPD. Residues 149–169 form a helical membrane-spanning segment; the sequence is LKAWTILVKWVFFLLPYLYLI. Residues 170-196 lie on the Lumenal side of the membrane; sequence TRPNSSVWPAYAFTQSAWFAPLRNPSN. N-linked (GlcNAc...) asparagine glycans are attached at residues N173 and N196. A helical membrane pass occupies residues 197–216; that stretch reads FTRIFATFEFLSISIYYQLL. Over 217 to 263 the chain is Cytoplasmic; sequence KNVEHKSKIKNLQDTNKLVKLVSLVPEGVIPVANLKGKLITLLQYWD. The helical transmembrane segment at 264 to 284 threads the bilayer; that stretch reads LLSMLITDISFVLIVLGLLTY. Residue L285 is a topological domain, lumenal.

The protein belongs to the GET2 family. As to quaternary structure, component of the Golgi to ER traffic (GET) complex, which is composed of GET1, GET2 and GET3. Within the complex, GET1 and GET2 form a heterotetramer which is stabilized by phosphatidylinositol binding and which binds to the GET3 homodimer.

The protein localises to the endoplasmic reticulum membrane. The protein resides in the golgi apparatus membrane. Required for the post-translational delivery of tail-anchored (TA) proteins to the endoplasmic reticulum. Together with GET1, acts as a membrane receptor for soluble GET3, which recognizes and selectively binds the transmembrane domain of TA proteins in the cytosol. The GET complex cooperates with the HDEL receptor ERD2 to mediate the ATP-dependent retrieval of resident ER proteins that contain a C-terminal H-D-E-L retention signal from the Golgi to the ER. Involved in DNA replication and DNA damage response and also in cell wall function. The sequence is that of Golgi to ER traffic protein 2 from Saccharomyces cerevisiae (strain RM11-1a) (Baker's yeast).